A 166-amino-acid polypeptide reads, in one-letter code: 2-C-methyl-D-erythritol 2,4-cyclodiphosphate synthase (166 aa).

2 residues coordinate a divalent metal cation: aspartate 12 and histidine 14. 4-CDP-2-C-methyl-D-erythritol 2-phosphate-binding positions include 12 to 14 and 38 to 39; these read DVH and HS. Histidine 46 serves as a coordination point for a divalent metal cation. 4-CDP-2-C-methyl-D-erythritol 2-phosphate is bound by residues 60–62, 136–139, phenylalanine 143, and arginine 146; these read DIG and TTSE.

This sequence belongs to the IspF family. In terms of assembly, homotrimer. The cofactor is a divalent metal cation.

The enzyme catalyses 4-CDP-2-C-methyl-D-erythritol 2-phosphate = 2-C-methyl-D-erythritol 2,4-cyclic diphosphate + CMP. It functions in the pathway isoprenoid biosynthesis; isopentenyl diphosphate biosynthesis via DXP pathway; isopentenyl diphosphate from 1-deoxy-D-xylulose 5-phosphate: step 4/6. Functionally, involved in the biosynthesis of isopentenyl diphosphate (IPP) and dimethylallyl diphosphate (DMAPP), two major building blocks of isoprenoid compounds. Catalyzes the conversion of 4-diphosphocytidyl-2-C-methyl-D-erythritol 2-phosphate (CDP-ME2P) to 2-C-methyl-D-erythritol 2,4-cyclodiphosphate (ME-CPP) with a corresponding release of cytidine 5-monophosphate (CMP). The sequence is that of 2-C-methyl-D-erythritol 2,4-cyclodiphosphate synthase from Xanthomonas axonopodis pv. citri (strain 306).